The sequence spans 261 residues: Glucosamine-6-phosphate deaminase (261 aa).

The active-site Proton acceptor; for enolization step is aspartate 67. Aspartate 136 functions as the For ring-opening step in the catalytic mechanism. Histidine 138 acts as the Proton acceptor; for ring-opening step in catalysis. The For ring-opening step role is filled by glutamate 143.

It belongs to the glucosamine/galactosamine-6-phosphate isomerase family. NagB subfamily.

The catalysed reaction is alpha-D-glucosamine 6-phosphate + H2O = beta-D-fructose 6-phosphate + NH4(+). It participates in amino-sugar metabolism; N-acetylneuraminate degradation; D-fructose 6-phosphate from N-acetylneuraminate: step 5/5. Catalyzes the reversible isomerization-deamination of glucosamine 6-phosphate (GlcN6P) to form fructose 6-phosphate (Fru6P) and ammonium ion. The protein is Glucosamine-6-phosphate deaminase of Streptomyces avermitilis (strain ATCC 31267 / DSM 46492 / JCM 5070 / NBRC 14893 / NCIMB 12804 / NRRL 8165 / MA-4680).